We begin with the raw amino-acid sequence, 657 residues long: Outer dense fiber protein 2 (657 aa).

Phosphoserine is present on residues Ser73 and Ser74. Thr92 carries the phosphothreonine modification. Phosphoserine; by TSSK4 is present on Ser95. 2 positions are modified to phosphoserine: Ser106 and Ser109. A Phosphothreonine modification is found at Thr110. A phosphoserine mark is found at Ser115 and Ser129. A Glycyl lysine isopeptide (Lys-Gly) (interchain with G-Cter in SUMO2) cross-link involves residue Lys138. Phosphoserine is present on Ser139. 2 coiled-coil regions span residues 144-423 (QKGE…AEQL) and 461-635 (EIIV…SDLR). Thr231 carries the post-translational modification Phosphothreonine. Phosphoserine is present on residues Ser261 and Ser632.

This sequence belongs to the ODF2 family. Self-associates. Associates with microtubules and forms a fibrillar structure partially linked to the microtubule network. Interacts via its C-terminus with PLK1. Interacts with ODF1. Interacts with MARK4; the interaction is required for localization of ODF2 to centrioles. Interacts with TSSK4. Interacts with AKNA. Interacts with CFAP58. Interacts with BBOF1. Interacts with CCDC38. Interacts with CCDC42. In terms of processing, tyrosine phosphorylated. Phosphorylated on Ser-95 by TSSK4.

The protein resides in the cytoplasm. It is found in the cytoskeleton. The protein localises to the microtubule organizing center. Its subcellular location is the centrosome. It localises to the cell projection. The protein resides in the cilium. It is found in the centriole. The protein localises to the spindle pole. Its subcellular location is the flagellum. Its function is as follows. Seems to be a major component of sperm tail outer dense fibers (ODF). ODFs are filamentous structures located on the outside of the axoneme in the midpiece and principal piece of the mammalian sperm tail and may help to maintain the passive elastic structures and elastic recoil of the sperm tail. May have a modulating influence on sperm motility. Functions as a general scaffold protein that is specifically localized at the distal/subdistal appendages of mother centrioles. Component of the centrosome matrix required for the localization of PLK1 and NIN to the centrosomes. Required for the formation and/or maintenance of normal CETN1 assembly. The sequence is that of Outer dense fiber protein 2 (ODF2) from Bos taurus (Bovine).